Reading from the N-terminus, the 179-residue chain is ADP-ribosylation factor-like protein 5B (179 aa).

Residue Gly2 is the site of N-myristoyl glycine attachment. GTP contacts are provided by residues 23–30 (GLDNAGKT), 66–70 (DIGGQ), 125–128 (NKQD), and Ala159.

It belongs to the small GTPase superfamily. Arf family.

Binds and exchanges GTP and GDP. The sequence is that of ADP-ribosylation factor-like protein 5B (Arl5b) from Mus musculus (Mouse).